Reading from the N-terminus, the 520-residue chain is Putative lipase ATG15 (520 aa).

At M1 to P14 the chain is on the cytoplasmic side. A helical; Signal-anchor for type II membrane protein membrane pass occupies residues L15–L35. Residues P36 to L520 are Lumenal-facing. 3 N-linked (GlcNAc...) asparagine glycosylation sites follow: N173, N202, and N208. S332 acts as the Charge relay system in catalysis.

Belongs to the AB hydrolase superfamily. Lipase family. In terms of assembly, binds to both phosphatidylinositol (PI) and phosphatidylinositol 3,5-bisphosphate (PIP2). Glycosylated.

It is found in the endosome. Its subcellular location is the multivesicular body membrane. The protein localises to the prevacuolar compartment membrane. The enzyme catalyses a triacylglycerol + H2O = a diacylglycerol + a fatty acid + H(+). In terms of biological role, lipase which is essential for lysis of subvacuolar cytoplasm to vacuole targeted bodies and intravacuolar autophagic bodies. Involved in the lysis of intravacuolar multivesicular body (MVB) vesicles. The intravacuolar membrane disintegration by ATG15 is critical to life span extension. The sequence is that of Putative lipase ATG15 (ATG15) from Saccharomyces cerevisiae (strain ATCC 204508 / S288c) (Baker's yeast).